Here is a 274-residue protein sequence, read N- to C-terminus: NADPH-dependent 7-cyano-7-deazaguanine reductase (274 aa).

Residue 80–82 (VES) participates in substrate binding. 82–83 (SK) is an NADPH binding site. Cysteine 181 functions as the Thioimide intermediate in the catalytic mechanism. Aspartate 188 acts as the Proton donor in catalysis. 220–221 (HE) lines the substrate pocket. 249-250 (RG) is an NADPH binding site.

Belongs to the GTP cyclohydrolase I family. QueF type 2 subfamily. As to quaternary structure, homodimer.

The protein localises to the cytoplasm. It catalyses the reaction 7-aminomethyl-7-carbaguanine + 2 NADP(+) = 7-cyano-7-deazaguanine + 2 NADPH + 3 H(+). Its pathway is tRNA modification; tRNA-queuosine biosynthesis. Its function is as follows. Catalyzes the NADPH-dependent reduction of 7-cyano-7-deazaguanine (preQ0) to 7-aminomethyl-7-deazaguanine (preQ1). This Burkholderia vietnamiensis (strain G4 / LMG 22486) (Burkholderia cepacia (strain R1808)) protein is NADPH-dependent 7-cyano-7-deazaguanine reductase.